A 494-amino-acid polypeptide reads, in one-letter code: Aspartyl/glutamyl-tRNA(Asn/Gln) amidotransferase subunit B (494 aa).

This sequence belongs to the GatB/GatE family. GatB subfamily. Heterotrimer of A, B and C subunits.

The catalysed reaction is L-glutamyl-tRNA(Gln) + L-glutamine + ATP + H2O = L-glutaminyl-tRNA(Gln) + L-glutamate + ADP + phosphate + H(+). The enzyme catalyses L-aspartyl-tRNA(Asn) + L-glutamine + ATP + H2O = L-asparaginyl-tRNA(Asn) + L-glutamate + ADP + phosphate + 2 H(+). Allows the formation of correctly charged Asn-tRNA(Asn) or Gln-tRNA(Gln) through the transamidation of misacylated Asp-tRNA(Asn) or Glu-tRNA(Gln) in organisms which lack either or both of asparaginyl-tRNA or glutaminyl-tRNA synthetases. The reaction takes place in the presence of glutamine and ATP through an activated phospho-Asp-tRNA(Asn) or phospho-Glu-tRNA(Gln). The chain is Aspartyl/glutamyl-tRNA(Asn/Gln) amidotransferase subunit B from Synechococcus sp. (strain CC9902).